Consider the following 113-residue polypeptide: 14 kDa zinc-binding protein (113 aa).

The 111-residue stretch at 3 to 113 (IFGKIISKEI…GGRQMNWPPG (111 aa)) folds into the HIT domain. The Histidine triad motif motif lies at 97–101 (HIHVH).

In terms of assembly, homodimer.

The sequence is that of 14 kDa zinc-binding protein from Brassica juncea (Indian mustard).